The sequence spans 43 residues: Cytochrome b559 subunit beta (43 aa).

Residues 18–34 (WLAVHTLAVPSVFFLGA) traverse the membrane as a helical segment. His22 contacts heme.

It belongs to the PsbE/PsbF family. In terms of assembly, heterodimer of an alpha subunit and a beta subunit. PSII is composed of 1 copy each of membrane proteins PsbA, PsbB, PsbC, PsbD, PsbE, PsbF, PsbH, PsbI, PsbJ, PsbK, PsbL, PsbM, PsbT, PsbX, PsbY, PsbZ, Psb30/Ycf12, peripheral proteins PsbO, CyanoQ (PsbQ), PsbU, PsbV and a large number of cofactors. It forms dimeric complexes. It depends on heme b as a cofactor.

It is found in the cellular thylakoid membrane. In terms of biological role, this b-type cytochrome is tightly associated with the reaction center of photosystem II (PSII). PSII is a light-driven water:plastoquinone oxidoreductase that uses light energy to abstract electrons from H(2)O, generating O(2) and a proton gradient subsequently used for ATP formation. It consists of a core antenna complex that captures photons, and an electron transfer chain that converts photonic excitation into a charge separation. The chain is Cytochrome b559 subunit beta from Picosynechococcus sp. (strain ATCC 27264 / PCC 7002 / PR-6) (Agmenellum quadruplicatum).